The sequence spans 283 residues: tRNA-cytidine(32) 2-sulfurtransferase (283 aa).

The short motif at 37-42 is the PP-loop motif element; the sequence is SGGKDS. Cysteine 112, cysteine 115, and cysteine 203 together coordinate [4Fe-4S] cluster.

This sequence belongs to the TtcA family. Homodimer. Requires Mg(2+) as cofactor. It depends on [4Fe-4S] cluster as a cofactor.

The protein localises to the cytoplasm. The enzyme catalyses cytidine(32) in tRNA + S-sulfanyl-L-cysteinyl-[cysteine desulfurase] + AH2 + ATP = 2-thiocytidine(32) in tRNA + L-cysteinyl-[cysteine desulfurase] + A + AMP + diphosphate + H(+). It functions in the pathway tRNA modification. Functionally, catalyzes the ATP-dependent 2-thiolation of cytidine in position 32 of tRNA, to form 2-thiocytidine (s(2)C32). The sulfur atoms are provided by the cysteine/cysteine desulfurase (IscS) system. The protein is tRNA-cytidine(32) 2-sulfurtransferase of Legionella pneumophila (strain Corby).